The chain runs to 496 residues: Glycerol kinase (496 aa).

Thr-14 is an ADP binding site. Positions 14 and 15 each coordinate ATP. Residue Thr-14 coordinates sn-glycerol 3-phosphate. Arg-84, Glu-85, Tyr-136, and Asp-246 together coordinate sn-glycerol 3-phosphate. Glycerol contacts are provided by Arg-84, Glu-85, Tyr-136, Asp-246, and Gln-247. 2 residues coordinate ADP: Thr-268 and Gly-313. Positions 268, 313, 317, and 414 each coordinate ATP. Gly-414 and Asn-418 together coordinate ADP.

The protein belongs to the FGGY kinase family.

It carries out the reaction glycerol + ATP = sn-glycerol 3-phosphate + ADP + H(+). It functions in the pathway polyol metabolism; glycerol degradation via glycerol kinase pathway; sn-glycerol 3-phosphate from glycerol: step 1/1. With respect to regulation, inhibited by fructose 1,6-bisphosphate (FBP). In terms of biological role, key enzyme in the regulation of glycerol uptake and metabolism. Catalyzes the phosphorylation of glycerol to yield sn-glycerol 3-phosphate. The sequence is that of Glycerol kinase from Myxococcus xanthus (strain DK1622).